The following is a 573-amino-acid chain: 2-succinyl-5-enolpyruvyl-6-hydroxy-3-cyclohexene-1-carboxylate synthase (573 aa).

The protein belongs to the TPP enzyme family. MenD subfamily. As to quaternary structure, homodimer. Mg(2+) is required as a cofactor. Requires Mn(2+) as cofactor. It depends on thiamine diphosphate as a cofactor.

It catalyses the reaction isochorismate + 2-oxoglutarate + H(+) = 5-enolpyruvoyl-6-hydroxy-2-succinyl-cyclohex-3-ene-1-carboxylate + CO2. Its pathway is quinol/quinone metabolism; 1,4-dihydroxy-2-naphthoate biosynthesis; 1,4-dihydroxy-2-naphthoate from chorismate: step 2/7. The protein operates within quinol/quinone metabolism; menaquinone biosynthesis. Functionally, catalyzes the thiamine diphosphate-dependent decarboxylation of 2-oxoglutarate and the subsequent addition of the resulting succinic semialdehyde-thiamine pyrophosphate anion to isochorismate to yield 2-succinyl-5-enolpyruvyl-6-hydroxy-3-cyclohexene-1-carboxylate (SEPHCHC). This is 2-succinyl-5-enolpyruvyl-6-hydroxy-3-cyclohexene-1-carboxylate synthase from Shewanella oneidensis (strain ATCC 700550 / JCM 31522 / CIP 106686 / LMG 19005 / NCIMB 14063 / MR-1).